The primary structure comprises 221 residues: Probable septum site-determining protein MinC (221 aa).

It belongs to the MinC family. In terms of assembly, interacts with MinD and FtsZ.

In terms of biological role, cell division inhibitor that blocks the formation of polar Z ring septums. Rapidly oscillates between the poles of the cell to destabilize FtsZ filaments that have formed before they mature into polar Z rings. Prevents FtsZ polymerization. This Shewanella sp. (strain MR-7) protein is Probable septum site-determining protein MinC.